The chain runs to 713 residues: Serologically defined colon cancer antigen 8 (713 aa).

Phosphoserine is present on residues Ser-4 and Ser-28. A disordered region spans residues 84–103 (QADKESEVSPSRRRKMSPLR). Residues 129–175 (IHHLEAEVKFCKEELSGMKNKIQVVVLENEGLQQQLKSQRQEETLRE) adopt a coiled-coil conformation. Residues 194-215 (EDSGVGETSKRPFSHDNADFGK) form a disordered region. Residues 201-212 (TSKRPFSHDNAD) are compositionally biased toward basic and acidic residues. The segment at 216–713 (AASAGEQLEL…QLPSMPQSDC (498 aa)) is sufficient for homodimerization. Coiled-coil stretches lie at residues 223–273 (LELE…LLAA) and 348–707 (EEAN…QLPS). Positions 533–713 (HQLHLTRQEK…QLPSMPQSDC (181 aa)) are mediates interaction with OFD1.

Homodimer. Interacts with OFD1; the interaction is direct. Interacts with FAM161A. Interacts with RABEP2, ERC1 and CEP131. In terms of tissue distribution, expressed in thymus, prostate, testis, ovary, small intestine, colon, mucosa, colon and renal cancer tumors.

The protein resides in the cytoplasm. The protein localises to the cytoskeleton. Its subcellular location is the microtubule organizing center. It is found in the centrosome. It localises to the centriole. The protein resides in the cilium basal body. The protein localises to the cell junction. In terms of biological role, plays a role in the establishment of cell polarity and epithelial lumen formation. Also plays an essential role in ciliogenesis and subsequent Hedgehog signaling pathway that requires the presence of intact primary cilia for pathway activation. Mechanistically, interacts with and mediates RABEP2 centrosomal localization which is critical for ciliogenesis. The chain is Serologically defined colon cancer antigen 8 (SDCCAG8) from Homo sapiens (Human).